The sequence spans 311 residues: Urease accessory protein UreD (311 aa).

The protein belongs to the UreD family. In terms of assembly, ureD, UreF and UreG form a complex that acts as a GTP-hydrolysis-dependent molecular chaperone, activating the urease apoprotein by helping to assemble the nickel containing metallocenter of UreC. The UreE protein probably delivers the nickel.

The protein resides in the cytoplasm. Required for maturation of urease via the functional incorporation of the urease nickel metallocenter. This is Urease accessory protein UreD from Parasynechococcus marenigrum (strain WH8102).